The primary structure comprises 1072 residues: MSGRAVSNPQHAQQSFDSGPQLYRDVPELHAVPSPSHSALMDSTHFDDFAFAYHGLPDQSSLVSLADHTHTSQSPTAFPQHQAMSGLAHSGLPFGTLPTGNRSQSMEGSELPPPDRTSPASNALEDPTTDEFGLASRNRADGTDLGGKHKEDKVDATPAWSELKTKAGKERKRLPLACMACRRKKIRCSGEKPACKHCLRSRILCVYKVTTRKAAPRTGYIAMLDKPLKRMEERIIKVIPKSDQEVASSVTRAVVKPVIPGTVPSSKPTKKRGAEEVFGPDLDAWAKAPSKPKIEGDDRPSCLQVQEAEENMLQHEGAEALPSKEIQEHLAEVFFDNIYGQSYHLLHKPSYMRKLKNGTLPPVLVLTVCAVAARFTSNPLVSSSGPELLRGEEWASHAQDICTRRYEWPNLTILTCLLILGLHEFGTCQSGRSWALGGHAIRMAFALQLHKDLEYDPSGRHSTKTQLSFIDREIRRRIMWACFLMDRFNSSGTDRPMFIREDTIQIPLPVKEKYFQFDLPAPTEMLDGQVPHPVSPNDGQIADARENMGVAAFLIRAIALWGRIITYLSQGGKDLDPNPMWEDESHYVKHLNDVVNLEASLPLSLKYSAENLEVHKTENTASQFLFMHICLQHNILFVSRAAMSARKQRGVHDDFFSEASKRTFDAANRISELLREAEQLRCFVSAPFAGYCAFSSTTVHILGIISRNPSMKLAAQANLTTNVKYLHKMKKYWGMFHWMVENVHTQYRNALDAMRAGANVQERATQSSFLQYGDWFNCYPHGLSDAEFMDPATLKRKDSGADGVLEAKSELQSVEEYFSTLPTPRSAENKDTIRAAAPKRKQSAKKQTGMPAQPGQHLDSLQSTDADAVSQERKFSGGLGLQTTGAADFNPLAASNPQNPAFSTTMPPTSPANMTAFAHHAYTPTFFPPELLAMNFGQGSNGNIDPLDRQLVYGGYSMDASTGLGDGQDMTSGLDWDTVASGAQPDGGLQGRRSNVKAGMHGQSAGMADGAGLSGLEASSAWFMPFNMEPPDIGQDPGFNMGGIDPFAGVFGGGGSGLATPNALGGLQQQGP.

The segment at residues 178 to 205 (CMACRRKKIRCSGEKPACKHCLRSRILC) is a DNA-binding region (zn(2)-C6 fungal-type).

The protein resides in the nucleus. Its function is as follows. Zn(2)-C6 fungal-type transcription factor that has a role in the establishment of the fungus within the plant and/or the progress of the disease. Regulates the expression of virulence factors such as SIX1 and SIX6. The sequence is that of Zn(2)-C6 fungal-type transcription factor FTF1a from Fusarium oxysporum f. sp. lycopersici (strain 4287 / CBS 123668 / FGSC 9935 / NRRL 34936) (Fusarium vascular wilt of tomato).